The following is a 419-amino-acid chain: UDP-N-acetylglucosamine 1-carboxyvinyltransferase (419 aa).

22–23 lines the phosphoenolpyruvate pocket; sequence KN. R92 provides a ligand contact to UDP-N-acetyl-alpha-D-glucosamine. The Proton donor role is filled by C116. Residue C116 is modified to 2-(S-cysteinyl)pyruvic acid O-phosphothioketal. UDP-N-acetyl-alpha-D-glucosamine contacts are provided by residues 121–125, D306, and I328; that span reads RPVDQ.

Belongs to the EPSP synthase family. MurA subfamily.

Its subcellular location is the cytoplasm. The catalysed reaction is phosphoenolpyruvate + UDP-N-acetyl-alpha-D-glucosamine = UDP-N-acetyl-3-O-(1-carboxyvinyl)-alpha-D-glucosamine + phosphate. Its pathway is cell wall biogenesis; peptidoglycan biosynthesis. Functionally, cell wall formation. Adds enolpyruvyl to UDP-N-acetylglucosamine. Target for the antibiotic phosphomycin. In Acinetobacter guillouiae (Acinetobacter genomosp. 11), this protein is UDP-N-acetylglucosamine 1-carboxyvinyltransferase.